A 390-amino-acid chain; its full sequence is 8-amino-7-oxononanoate synthase (390 aa).

Arginine 19 serves as a coordination point for substrate. Position 106–107 (106–107 (GY)) interacts with pyridoxal 5'-phosphate. Histidine 131 is a substrate binding site. Residues serine 176, histidine 204, and threonine 233 each contribute to the pyridoxal 5'-phosphate site. Lysine 236 is modified (N6-(pyridoxal phosphate)lysine). Position 350 (threonine 350) interacts with substrate.

Belongs to the class-II pyridoxal-phosphate-dependent aminotransferase family. BioF subfamily. In terms of assembly, homodimer. The cofactor is pyridoxal 5'-phosphate.

The catalysed reaction is 6-carboxyhexanoyl-[ACP] + L-alanine + H(+) = (8S)-8-amino-7-oxononanoate + holo-[ACP] + CO2. It functions in the pathway cofactor biosynthesis; biotin biosynthesis. Functionally, catalyzes the decarboxylative condensation of pimeloyl-[acyl-carrier protein] and L-alanine to produce 8-amino-7-oxononanoate (AON), [acyl-carrier protein], and carbon dioxide. The sequence is that of 8-amino-7-oxononanoate synthase from Pseudomonas putida (strain ATCC 47054 / DSM 6125 / CFBP 8728 / NCIMB 11950 / KT2440).